The chain runs to 273 residues: Cytosolic sulfotransferase 4 (273 aa).

74 to 79 serves as a coordination point for 3'-phosphoadenylyl sulfate; sequence KCGTTW. Histidine 121 functions as the Proton acceptor in the catalytic mechanism. Residues arginine 143 and 239 to 241 contribute to the 3'-phosphoadenylyl sulfate site; that span reads RKG.

Belongs to the sulfotransferase 1 family.

It is found in the cytoplasm. Its function is as follows. Sulfotransferase that utilizes 3'-phospho-5'-adenylyl sulfate (PAPS) as sulfonate donor. In Arabidopsis thaliana (Mouse-ear cress), this protein is Cytosolic sulfotransferase 4 (SOT4).